Here is a 156-residue protein sequence, read N- to C-terminus: MPRKGNTPKRDVLPDPLYNNKVVAKLINSIMLDGKKGVAQKICYDAFAIMGEKTGKEPLEVFEEAMNNVMPLLEVKARRIGGATYQVPIEVRADRRQTLGIRWIVDASRKRGEKYMRERLAGELLDAANNTGAAVKKREDTHKMAEANKAFAHYRY.

Belongs to the universal ribosomal protein uS7 family. As to quaternary structure, part of the 30S ribosomal subunit. Contacts proteins S9 and S11.

In terms of biological role, one of the primary rRNA binding proteins, it binds directly to 16S rRNA where it nucleates assembly of the head domain of the 30S subunit. Is located at the subunit interface close to the decoding center, probably blocks exit of the E-site tRNA. This chain is Small ribosomal subunit protein uS7, found in Clostridium novyi (strain NT).